We begin with the raw amino-acid sequence, 277 residues long: MNKILEVENLVFKYEKESDVNQLNGVSFSITKGEWVSIIGQNGSGKSTTARLIDGLFEEFEGIVKIDGERLTAENVWNLRRKIGMVFQNPDNQFVGATVEDDVAFGMENQGIPREEMIKRVDEALLAVNMLDFKTREPARLSGGQKQRVAVAGIIALRPEIIILDESTSMLDPTGRSEIMRVIHEIKDKYHLTVLSITHDLDEAASSDRILVMRAGEIIKEAAPSELFATSEDMVEIGLDVPFSSNLMKDLRTNGFDLPEKYLSEDELVELLADKLG.

The region spanning 5–240 is the ABC transporter domain; the sequence is LEVENLVFKY…SEDMVEIGLD (236 aa). Residue 40 to 47 participates in ATP binding; sequence GQNGSGKS. Residue Glu166 is the Proton acceptor of the active site.

This sequence belongs to the ABC transporter superfamily. Energy-coupling factor EcfA family. In terms of assembly, forms a stable energy-coupling factor (ECF) transporter complex composed of 2 membrane-embedded substrate-binding proteins (S component), 2 ATP-binding proteins (A component) and 2 transmembrane proteins (T component). In L.lactis forms a stable complex with EcfA' and EcfT and substrate-binding components. In E.coli forms a stable complex with EcfA', EcfT and individually with 3 tested substrate-binding components (BioY, NiaX and ThiT) with a stoichiometry of 1.1:1:1. The core ECF complex interacts with a number of substrate-specific binding components, including BioY, BioY2, HmpT, NiaX, PanT, QueT, RibU and ThiT.

It is found in the cell membrane. Functionally, ATP-binding (A) component of a common energy-coupling factor (ECF) ABC-transporter complex. Unlike classic ABC transporters this ECF transporter provides the energy necessary to transport a number of different substrates. In this organism these probably include biotin, thiamine precursor, niacin, pantothenic acid, queuosine precursor, riboflavin and thiamine. Uptake of niacin or riboflavin into proteosomes containing EcfA1A2T and Niax or RibU has been demonstrated. Uptake requires hydrolyzable Mg-ATP and is substrate-specific; NiaX-containing proteosomes did not transport riboflavin. This is Energy-coupling factor transporter ATP-binding protein EcfA1 from Lactococcus lactis subsp. cremoris (strain MG1363).